The following is a 348-amino-acid chain: Uroporphyrinogen decarboxylase (348 aa).

Residues 27-31 (RQAGR), Phe-46, Asp-76, Tyr-152, Ser-207, and His-320 contribute to the substrate site.

This sequence belongs to the uroporphyrinogen decarboxylase family. As to quaternary structure, homodimer.

Its subcellular location is the cytoplasm. It catalyses the reaction uroporphyrinogen III + 4 H(+) = coproporphyrinogen III + 4 CO2. The protein operates within porphyrin-containing compound metabolism; protoporphyrin-IX biosynthesis; coproporphyrinogen-III from 5-aminolevulinate: step 4/4. In terms of biological role, catalyzes the decarboxylation of four acetate groups of uroporphyrinogen-III to yield coproporphyrinogen-III. The chain is Uroporphyrinogen decarboxylase from Bacillus cereus (strain AH820).